The primary structure comprises 701 residues: Glycine--tRNA ligase beta subunit (701 aa).

This sequence belongs to the class-II aminoacyl-tRNA synthetase family. As to quaternary structure, tetramer of two alpha and two beta subunits.

Its subcellular location is the cytoplasm. It carries out the reaction tRNA(Gly) + glycine + ATP = glycyl-tRNA(Gly) + AMP + diphosphate. This chain is Glycine--tRNA ligase beta subunit, found in Anaeromyxobacter sp. (strain K).